A 417-amino-acid chain; its full sequence is MRSLLLGTLCLLAVALAAEVKKPVEAAAPGTAEKLSSKATTLAERSTGLAFSLYQAMAKDQAVENILLSPLVVASSLGLVSLGGKATTASQAKAVLSAEKLRDEEVHTGLGELVRSLSNSTARNVTWKLGSRLYGPSSVSFADDFVRSSKQHYNCEHSKINFRDKRSALQSINEWASQTTDGKLPEVTKDVERTDGALLVNAMFFKPHWDEKFHHKMVDNRGFMVTRSYTVGVTMMHRTGLYNYYDDEKEKLQLVEMPLAHKLSSLIILMPHHVEPLERLEKLLTKEQLKTWMGKMQKKAVAISLPKGVVEVTHDLQKHLAGLGLTEAIDKNKADLSRMSGKKDLYLASVFHATAFEWDTEGNPFDQDIYGREELRSPKLFYADHPFIFLVRDNQSGSLLFIGRLVRPKGDKMRDEL.

The first 17 residues, 1-17 (MRSLLLGTLCLLAVALA), serve as a signal peptide directing secretion. Position 93 is an N6-succinyllysine (Lys93). Residues Asn119 and Asn124 are each glycosylated (N-linked (GlcNAc...) asparagine). The residue at position 140 (Ser140) is a Phosphoserine. At Lys206 the chain carries N6-acetyllysine. Lys295 bears the N6-succinyllysine mark. Lys318 is modified (N6-acetyllysine). An N-linked (GlcNAc...) asparagine glycan is attached at Asn394. The Prevents secretion from ER signature appears at 414–417 (RDEL).

Belongs to the serpin family.

It is found in the endoplasmic reticulum lumen. Its function is as follows. Binds specifically to collagen. Could be involved as a chaperone in the biosynthetic pathway of collagen. In Rattus norvegicus (Rat), this protein is Serpin H1 (Serpinh1).